A 558-amino-acid chain; its full sequence is MTTTTTKFRDVEIRAPRGTELTAKSWLTEAPLRMLMNNLDPDVAENPKELVVYGGIGRAARNWECFDKIVDTLKNLETDETLLVQSGKPVGVFKTHKDAPRVLIANSNLVPHWANWEHFNELDAKALAMYGQMTAGSWIYIGSQGIVQGTYETFVEAGRQHYNGDLKGRWVLTAGLGGMGGAQPLAATLAGACSLNIECQQASIDFRLRTRYVDEQATDLDDALARIDRYTKEGKAISIALHGNAAEILPELVRRGVRPDMVTDQTSAHDPLNGYLPVGWTWEEYRERAKTEPEAVVKAAKQSMAKHVQAMLDFQKMGVPTFDYGNNIRQMAKEEGVANAFDFPGFVPAYIRPLFCRGIGPFRWAALSGDPEDIYKTDAKVKELIPDDEHLHHWLDMARERISFQGLPARICWVGLGLRAKLGLAFNEMVRSGELSAPIVIGRDHLDSGSVASPNRETEAMQDGSDAVSDWPLLNALLNTAGGATWVSLHHGGGVGMGFSQHSGVVIVCDGTDEAAARIARVLTNDPATGVMRHADAGYEIAINCAKEQGLHLPMITQ.

NAD(+) is bound by residues 54–55, Q132, 178–180, E198, 244–245, 265–269, 275–276, and Y324; these read GG, GMG, NA, QTSAH, and YL. C412 is an active-site residue. An NAD(+)-binding site is contributed by G494.

The protein belongs to the urocanase family. It depends on NAD(+) as a cofactor.

The protein resides in the cytoplasm. The enzyme catalyses 4-imidazolone-5-propanoate = trans-urocanate + H2O. Its pathway is amino-acid degradation; L-histidine degradation into L-glutamate; N-formimidoyl-L-glutamate from L-histidine: step 2/3. In terms of biological role, catalyzes the conversion of urocanate to 4-imidazolone-5-propionate. This chain is Urocanate hydratase, found in Acinetobacter baumannii (strain ACICU).